We begin with the raw amino-acid sequence, 588 residues long: A-type ATP synthase subunit A 3 (588 aa).

234 to 241 (GPFGSGKT) is a binding site for ATP.

The protein belongs to the ATPase alpha/beta chains family. Has multiple subunits with at least A(3), B(3), C, D, E, F, H, I and proteolipid K(x).

Its subcellular location is the cell membrane. The enzyme catalyses ATP + H2O + 4 H(+)(in) = ADP + phosphate + 5 H(+)(out). Functionally, component of the A-type ATP synthase that produces ATP from ADP in the presence of a proton gradient across the membrane. The A chain is the catalytic subunit. In Methanospirillum hungatei JF-1 (strain ATCC 27890 / DSM 864 / NBRC 100397 / JF-1), this protein is A-type ATP synthase subunit A 3.